The following is a 302-amino-acid chain: MDAKRLTHLQQLEAESIHIIREVAAEFDNPVMMYSIGKDSSVMLHLARKAFYPGKIPFPLLHVDTDWKFKEMIEFRDKTAEKYGFDLLVHKNPEGLEMGINPFVHGSSKHTDIMKTQGLKQALNKYGFDAAFGGARRDEEKSRAKERVYSFRDKNHTWDPKNQRPELWNTYNGQVNKGESIRVFPLSNWTELDIWQYIYLENIEIVPLYLSEKRPVVERDGMLIMVDDERLKLEEGEEIQHKDIRFRTLGCYPLTGAVESKANTLPEIIEEMLVATSSERQGRAIDHDSSGSMELKKRQGYF.

Residues Glu-279 to Phe-302 form a disordered region. The span at Arg-280–Phe-302 shows a compositional bias: basic and acidic residues.

Belongs to the PAPS reductase family. CysD subfamily. As to quaternary structure, heterodimer composed of CysD, the smaller subunit, and CysN.

The catalysed reaction is sulfate + ATP + H(+) = adenosine 5'-phosphosulfate + diphosphate. The protein operates within sulfur metabolism; hydrogen sulfide biosynthesis; sulfite from sulfate: step 1/3. With CysN forms the ATP sulfurylase (ATPS) that catalyzes the adenylation of sulfate producing adenosine 5'-phosphosulfate (APS) and diphosphate, the first enzymatic step in sulfur assimilation pathway. APS synthesis involves the formation of a high-energy phosphoric-sulfuric acid anhydride bond driven by GTP hydrolysis by CysN coupled to ATP hydrolysis by CysD. The sequence is that of Sulfate adenylyltransferase subunit 2 from Aliivibrio fischeri (strain ATCC 700601 / ES114) (Vibrio fischeri).